A 468-amino-acid chain; its full sequence is N-acetyltransferase SLI1 (468 aa).

Its subcellular location is the endoplasmic reticulum. Confers resistance to the sphingolipid biosynthesis inhibitor drug myriocin (ISP-1). Inactivates ISP-1 by converting it into N-acetyl-myriocin. Cooperates with YPK1 in mediating resistance to myriocin. The polypeptide is N-acetyltransferase SLI1 (SLI1) (Saccharomyces cerevisiae (strain ATCC 204508 / S288c) (Baker's yeast)).